The chain runs to 105 residues: MVKQIESKSAFQEALNSAGEKLVVVDFSATWCGPCKMIKPFFHSLSEKYSNVVFLEVDVDDCQDVAAECEVKCMPTFQFFKKGQKVDEFSGANKEKLEATIKGLI.

One can recognise a Thioredoxin domain in the interval Val2 to Gly103. Lys3 carries the post-translational modification N6-acetyllysine. The residue at position 8 (Lys8) is an N6-succinyllysine. Catalysis depends on nucleophile residues Cys32 and Cys35. An intrachain disulfide couples Cys32 to Cys35. Lys39 carries the post-translational modification N6-acetyllysine. S-nitrosocysteine occurs at positions 62 and 69. The residue at position 73 (Cys73) is an S-nitrosocysteine; alternate. Position 94 is an N6-acetyllysine; alternate (Lys94). Residue Lys94 is modified to N6-succinyllysine; alternate.

Belongs to the thioredoxin family. Homodimer; disulfide-linked. Interacts with TXNIP through the redox-active site. Interacts with MAP3K5 and CASP3. Interacts with APEX1; the interaction stimulates the FOS/JUN AP-1 DNA-binding activity in a redox-dependent manner. In the fully reduced protein, both Cys-69 and Cys-73 are nitrosylated in response to nitric oxide (NO). When two disulfide bonds are present in the protein, only Cys-73 is nitrosylated. Cys-73 can serve as donor for nitrosylation of target proteins.

It localises to the nucleus. It is found in the cytoplasm. The protein resides in the secreted. Functionally, participates in various redox reactions through the reversible oxidation of its active center dithiol to a disulfide and catalyzes dithiol-disulfide exchange reactions. Plays a role in the reversible S-nitrosylation of cysteine residues in target proteins, and thereby contributes to the response to intracellular nitric oxide. Nitrosylates the active site Cys of CASP3 in response to nitric oxide (NO), and thereby inhibits caspase-3 activity. Induces the FOS/JUN AP-1 DNA binding activity in ionizing radiation (IR) cells through its oxidation/reduction status and stimulates AP-1 transcriptional activity. The chain is Thioredoxin (TXN) from Equus caballus (Horse).